A 208-amino-acid polypeptide reads, in one-letter code: Uridine kinase (208 aa).

11–18 (GGTGSGKS) contacts ATP.

The protein belongs to the uridine kinase family.

The protein localises to the cytoplasm. The catalysed reaction is uridine + ATP = UMP + ADP + H(+). It carries out the reaction cytidine + ATP = CMP + ADP + H(+). The protein operates within pyrimidine metabolism; CTP biosynthesis via salvage pathway; CTP from cytidine: step 1/3. It functions in the pathway pyrimidine metabolism; UMP biosynthesis via salvage pathway; UMP from uridine: step 1/1. This is Uridine kinase from Clostridium perfringens (strain ATCC 13124 / DSM 756 / JCM 1290 / NCIMB 6125 / NCTC 8237 / Type A).